The primary structure comprises 610 residues: DEAD-box ATP-dependent RNA helicase 9, mitochondrial (610 aa).

The transit peptide at 1–66 (MISTVLRRSI…SSPFGVKVRD (66 aa)) directs the protein to the mitochondrion. Residues 116–144 (LAIADLGISPEIVKALKGRGIEKLFPIQK) carry the Q motif motif. Residues 147–321 (LEPAMEGRDM…KKYLNNPLTI (175 aa)) enclose the Helicase ATP-binding domain. An ATP-binding site is contributed by 160 to 167 (ARTGTGKT). The short motif at 269–272 (DEAD) is the DEAD box element. Residues 350 to 494 (IIGPLVKEHG…ELPSIAVERG (145 aa)) form the Helicase C-terminal domain. A compositionally biased stretch (gly residues) spans 542–557 (SGRSGGGGGSYGGSGG). The tract at residues 542–610 (SGRSGGGGGS…FGSNDGKRSY (69 aa)) is disordered. Low complexity predominate over residues 558–572 (SSSRYSGGSDRSSGF). A compositionally biased stretch (gly residues) spans 573 to 585 (GSFGSGGSSGGFG). The span at 586 to 596 (SDRSSQSSGRS) shows a compositional bias: low complexity.

It belongs to the DEAD box helicase family. DDX21/DDX50 subfamily.

It is found in the mitochondrion. It carries out the reaction ATP + H2O = ADP + phosphate + H(+). This is DEAD-box ATP-dependent RNA helicase 9, mitochondrial (RH9) from Arabidopsis thaliana (Mouse-ear cress).